A 475-amino-acid chain; its full sequence is Methyltransferase-like protein 25B (475 aa).

Residues 185–210 (NKRLVARAQRLDQELLQALDKMEKRH) adopt a coiled-coil conformation. Residues 406-426 (VVAFFSLALLLAPLVETLILL) traverse the membrane as a helical segment.

The protein belongs to the METTL25 family.

The protein resides in the membrane. The polypeptide is Methyltransferase-like protein 25B (Rattus norvegicus (Rat)).